A 391-amino-acid polypeptide reads, in one-letter code: 1-deoxy-D-xylulose 5-phosphate reductoisomerase (391 aa).

NADPH is bound by residues Thr-17, Gly-18, Ser-19, Ile-20, Asn-47, and Asn-130. A 1-deoxy-D-xylulose 5-phosphate-binding site is contributed by Lys-131. Glu-132 provides a ligand contact to NADPH. Asp-156 provides a ligand contact to Mn(2+). 4 residues coordinate 1-deoxy-D-xylulose 5-phosphate: Ser-157, Glu-158, Ser-182, and His-205. Residue Glu-158 participates in Mn(2+) binding. NADPH is bound at residue Gly-211. 1-deoxy-D-xylulose 5-phosphate-binding residues include Ser-218, Asn-223, Lys-224, and Glu-227. Glu-227 provides a ligand contact to Mn(2+).

It belongs to the DXR family. Mg(2+) serves as cofactor. It depends on Mn(2+) as a cofactor.

It carries out the reaction 2-C-methyl-D-erythritol 4-phosphate + NADP(+) = 1-deoxy-D-xylulose 5-phosphate + NADPH + H(+). It participates in isoprenoid biosynthesis; isopentenyl diphosphate biosynthesis via DXP pathway; isopentenyl diphosphate from 1-deoxy-D-xylulose 5-phosphate: step 1/6. Catalyzes the NADPH-dependent rearrangement and reduction of 1-deoxy-D-xylulose-5-phosphate (DXP) to 2-C-methyl-D-erythritol 4-phosphate (MEP). This is 1-deoxy-D-xylulose 5-phosphate reductoisomerase from Sinorhizobium medicae (strain WSM419) (Ensifer medicae).